We begin with the raw amino-acid sequence, 251 residues long: Malonyl-[acyl-carrier protein] O-methyltransferase (251 aa).

It belongs to the methyltransferase superfamily.

The enzyme catalyses malonyl-[ACP] + S-adenosyl-L-methionine = malonyl-[ACP] methyl ester + S-adenosyl-L-homocysteine. It participates in cofactor biosynthesis; biotin biosynthesis. Converts the free carboxyl group of a malonyl-thioester to its methyl ester by transfer of a methyl group from S-adenosyl-L-methionine (SAM). It allows to synthesize pimeloyl-ACP via the fatty acid synthetic pathway. The polypeptide is Malonyl-[acyl-carrier protein] O-methyltransferase (Erwinia billingiae (strain Eb661)).